We begin with the raw amino-acid sequence, 404 residues long: Diaminopropionate ammonia-lyase (404 aa).

N6-(pyridoxal phosphate)lysine is present on lysine 78.

Belongs to the diaminopropionate ammonia-lyase family. In terms of assembly, homodimer. The cofactor is pyridoxal 5'-phosphate.

It catalyses the reaction (S)-2,3-diaminopropanoate + H2O + H(+) = pyruvate + 2 NH4(+). The enzyme catalyses (R)-2,3-diaminopropanoate + H2O + H(+) = pyruvate + 2 NH4(+). With respect to regulation, competitively inhibited by L- and D-alanine. Catalyzes the alpha,beta-elimination reaction of both L- and D-alpha,beta-diaminopropionate (DAP) to form pyruvate and ammonia. In vitro L- and D-isomers of serine are also degraded, though slowly; it is the only serine dehydratase which can eliminate an amino group at the beta-carbon position. In vivo L-, D- and a mixure of DL-DAP allow growth. DL-DAP is toxic in the absence of this enzyme, it may inhibit enzymes involved in the synthesis of pyruvate and aspartate, as well as amino acids derived from them. The polypeptide is Diaminopropionate ammonia-lyase (dpaL) (Salmonella typhimurium (strain LT2 / SGSC1412 / ATCC 700720)).